Consider the following 211-residue polypeptide: Protein-L-isoaspartate O-methyltransferase (211 aa).

Ser62 is a catalytic residue.

This sequence belongs to the methyltransferase superfamily. L-isoaspartyl/D-aspartyl protein methyltransferase family.

Its subcellular location is the cytoplasm. The enzyme catalyses [protein]-L-isoaspartate + S-adenosyl-L-methionine = [protein]-L-isoaspartate alpha-methyl ester + S-adenosyl-L-homocysteine. In terms of biological role, catalyzes the methyl esterification of L-isoaspartyl residues in peptides and proteins that result from spontaneous decomposition of normal L-aspartyl and L-asparaginyl residues. It plays a role in the repair and/or degradation of damaged proteins. The sequence is that of Protein-L-isoaspartate O-methyltransferase from Shewanella denitrificans (strain OS217 / ATCC BAA-1090 / DSM 15013).